The primary structure comprises 255 residues: Pimeloyl-[acyl-carrier protein] methyl ester esterase (255 aa).

Positions 16 to 242 (LVLLHGWGLN…AAHAPFISHP (227 aa)) constitute an AB hydrolase-1 domain. Residues Trp-22, 82-83 (SL), and 143-147 (FLALQ) each bind substrate. Ser-82 (nucleophile) is an active-site residue. Residues Asp-207 and His-235 contribute to the active site. His-235 contributes to the substrate binding site.

This sequence belongs to the AB hydrolase superfamily. Carboxylesterase BioH family. As to quaternary structure, monomer.

The protein localises to the cytoplasm. The enzyme catalyses 6-carboxyhexanoyl-[ACP] methyl ester + H2O = 6-carboxyhexanoyl-[ACP] + methanol + H(+). The protein operates within cofactor biosynthesis; biotin biosynthesis. The physiological role of BioH is to remove the methyl group introduced by BioC when the pimeloyl moiety is complete. It allows to synthesize pimeloyl-ACP via the fatty acid synthetic pathway through the hydrolysis of the ester bonds of pimeloyl-ACP esters. The chain is Pimeloyl-[acyl-carrier protein] methyl ester esterase from Pectobacterium atrosepticum (strain SCRI 1043 / ATCC BAA-672) (Erwinia carotovora subsp. atroseptica).